The sequence spans 445 residues: 3-phosphoshikimate 1-carboxyvinyltransferase (445 aa).

3-phosphoshikimate contacts are provided by Lys-21, Ser-22, and Arg-26. Residue Lys-21 coordinates phosphoenolpyruvate. The phosphoenolpyruvate site is built by Gly-92 and Arg-120. Residues Ser-165, Gln-166, Asp-307, and Lys-334 each coordinate 3-phosphoshikimate. Gln-166 serves as a coordination point for phosphoenolpyruvate. The active-site Proton acceptor is the Asp-307. Phosphoenolpyruvate-binding residues include Arg-338, Arg-379, and Lys-405.

It belongs to the EPSP synthase family. In terms of assembly, monomer.

It is found in the cytoplasm. It carries out the reaction 3-phosphoshikimate + phosphoenolpyruvate = 5-O-(1-carboxyvinyl)-3-phosphoshikimate + phosphate. It participates in metabolic intermediate biosynthesis; chorismate biosynthesis; chorismate from D-erythrose 4-phosphate and phosphoenolpyruvate: step 6/7. Functionally, catalyzes the transfer of the enolpyruvyl moiety of phosphoenolpyruvate (PEP) to the 5-hydroxyl of shikimate-3-phosphate (S3P) to produce enolpyruvyl shikimate-3-phosphate and inorganic phosphate. The protein is 3-phosphoshikimate 1-carboxyvinyltransferase of Chlamydia felis (strain Fe/C-56) (Chlamydophila felis).